Reading from the N-terminus, the 410-residue chain is Chorismate synthase (410 aa).

Positions 40 and 46 each coordinate NADP(+). Residues 129–131 (RSS), 257–258 (QA), G302, 317–321 (KPISS), and R343 contribute to the FMN site.

Belongs to the chorismate synthase family. As to quaternary structure, homotetramer. The cofactor is FMNH2.

The enzyme catalyses 5-O-(1-carboxyvinyl)-3-phosphoshikimate = chorismate + phosphate. The protein operates within metabolic intermediate biosynthesis; chorismate biosynthesis; chorismate from D-erythrose 4-phosphate and phosphoenolpyruvate: step 7/7. Catalyzes the anti-1,4-elimination of the C-3 phosphate and the C-6 proR hydrogen from 5-enolpyruvylshikimate-3-phosphate (EPSP) to yield chorismate, which is the branch point compound that serves as the starting substrate for the three terminal pathways of aromatic amino acid biosynthesis. This reaction introduces a second double bond into the aromatic ring system. This is Chorismate synthase from Chlorobaculum parvum (strain DSM 263 / NCIMB 8327) (Chlorobium vibrioforme subsp. thiosulfatophilum).